The following is a 306-amino-acid chain: Ribonuclease Z (306 aa).

Zn(2+) contacts are provided by His63, His65, Asp67, His68, His140, Asp211, and His269. Residue Asp67 is the Proton acceptor of the active site.

Belongs to the RNase Z family. As to quaternary structure, homodimer. The cofactor is Zn(2+).

The enzyme catalyses Endonucleolytic cleavage of RNA, removing extra 3' nucleotides from tRNA precursor, generating 3' termini of tRNAs. A 3'-hydroxy group is left at the tRNA terminus and a 5'-phosphoryl group is left at the trailer molecule.. Its function is as follows. Zinc phosphodiesterase, which displays some tRNA 3'-processing endonuclease activity. Probably involved in tRNA maturation, by removing a 3'-trailer from precursor tRNA. The sequence is that of Ribonuclease Z from Listeria monocytogenes serotype 4b (strain CLIP80459).